Here is a 150-residue protein sequence, read N- to C-terminus: Ribosome-binding factor A (150 aa).

A disordered region spans residues 131–150 (LSHDDDEDGGADEAPRNGDE).

The protein belongs to the RbfA family. In terms of assembly, monomer. Binds 30S ribosomal subunits, but not 50S ribosomal subunits or 70S ribosomes.

It localises to the cytoplasm. Its function is as follows. One of several proteins that assist in the late maturation steps of the functional core of the 30S ribosomal subunit. Associates with free 30S ribosomal subunits (but not with 30S subunits that are part of 70S ribosomes or polysomes). Required for efficient processing of 16S rRNA. May interact with the 5'-terminal helix region of 16S rRNA. This chain is Ribosome-binding factor A, found in Brucella melitensis biotype 2 (strain ATCC 23457).